Here is a 339-residue protein sequence, read N- to C-terminus: Tetraacyldisaccharide 4'-kinase (339 aa).

53–60 (TCGGAGKT) is a binding site for ATP.

It belongs to the LpxK family.

It carries out the reaction a lipid A disaccharide + ATP = a lipid IVA + ADP + H(+). Its pathway is glycolipid biosynthesis; lipid IV(A) biosynthesis; lipid IV(A) from (3R)-3-hydroxytetradecanoyl-[acyl-carrier-protein] and UDP-N-acetyl-alpha-D-glucosamine: step 6/6. Transfers the gamma-phosphate of ATP to the 4'-position of a tetraacyldisaccharide 1-phosphate intermediate (termed DS-1-P) to form tetraacyldisaccharide 1,4'-bis-phosphate (lipid IVA). This is Tetraacyldisaccharide 4'-kinase from Bartonella henselae (strain ATCC 49882 / DSM 28221 / CCUG 30454 / Houston 1) (Rochalimaea henselae).